A 473-amino-acid polypeptide reads, in one-letter code: Adhesive plaque matrix protein 2 (473 aa).

The signal sequence occupies residues 1 to 17; that stretch reads MLFSFFLLLTCTQLCLG. 3',4'-dihydroxyphenylalanine occurs at positions 23, 31, 36, and 43. EGF-like domains follow at residues 45–81, 82–117, 118–154, 155–191, 192–228, 229–265, 266–301, 302–340, 342–378, 383–420, and 425–461; these read PVNP…YNCN, LKNA…GRLC, EKNV…GPRC, EVHA…GPTC, QENA…GPEC, ERYV…GPTC, KVNV…GPTC, GENV…PTCE, KPNP…RHCT, and KKNP…RYCS. Intrachain disulfides connect cysteine 49/cysteine 60, cysteine 54/cysteine 69, cysteine 71/cysteine 80, cysteine 86/cysteine 97, cysteine 91/cysteine 106, cysteine 108/cysteine 117, cysteine 122/cysteine 133, cysteine 127/cysteine 143, cysteine 145/cysteine 154, cysteine 159/cysteine 170, cysteine 164/cysteine 180, cysteine 182/cysteine 191, cysteine 196/cysteine 207, cysteine 201/cysteine 217, cysteine 219/cysteine 228, cysteine 233/cysteine 244, cysteine 238/cysteine 254, cysteine 256/cysteine 265, cysteine 270/cysteine 281, cysteine 275/cysteine 290, cysteine 292/cysteine 301, cysteine 306/cysteine 317, cysteine 311/cysteine 328, cysteine 330/cysteine 339, cysteine 346/cysteine 357, cysteine 351/cysteine 366, cysteine 368/cysteine 377, cysteine 387/cysteine 399, cysteine 393/cysteine 408, cysteine 410/cysteine 419, cysteine 429/cysteine 440, cysteine 434/cysteine 449, and cysteine 451/cysteine 460. N-linked (GlcNAc...) asparagine glycosylation occurs at asparagine 93.

Contains L-DOPA (3',4'-dihydroxyphenylalanine). In terms of tissue distribution, produced by the byssal gland.

Its subcellular location is the secreted. Its function is as follows. Provides adhesiveness to the mussel's foot. Mussels produce one of the strongest water insoluble glues. The mussel's adhesive is a bundle of threads, called a byssus, formed by a fibrous collagenous core coated with adhesive proteins. The protein is Adhesive plaque matrix protein 2 (FP2) of Mytilus galloprovincialis (Mediterranean mussel).